The sequence spans 377 residues: Spermidine/putrescine import ATP-binding protein PotA (377 aa).

In terms of domain architecture, ABC transporter spans 18 to 248 (IRLSGISKSF…PKNLFVARFI (231 aa)). Residue 50 to 57 (GPSGCGKT) coordinates ATP.

It belongs to the ABC transporter superfamily. Spermidine/putrescine importer (TC 3.A.1.11.1) family. The complex is composed of two ATP-binding proteins (PotA), two transmembrane proteins (PotB and PotC) and a solute-binding protein (PotD).

It is found in the cell inner membrane. The enzyme catalyses ATP + H2O + polyamine-[polyamine-binding protein]Side 1 = ADP + phosphate + polyamineSide 2 + [polyamine-binding protein]Side 1.. Functionally, part of the ABC transporter complex PotABCD involved in spermidine/putrescine import. Responsible for energy coupling to the transport system. The polypeptide is Spermidine/putrescine import ATP-binding protein PotA (Vibrio vulnificus (strain CMCP6)).